A 247-amino-acid chain; its full sequence is Pyridoxine 5'-phosphate synthase (247 aa).

Asparagine 12 contributes to the 3-amino-2-oxopropyl phosphate binding site. 1-deoxy-D-xylulose 5-phosphate is bound at residue 14–15 (DH). 3-amino-2-oxopropyl phosphate is bound at residue arginine 23. Histidine 48 acts as the Proton acceptor in catalysis. 1-deoxy-D-xylulose 5-phosphate is bound by residues arginine 50 and histidine 55. Glutamate 75 acts as the Proton acceptor in catalysis. Threonine 105 is a binding site for 1-deoxy-D-xylulose 5-phosphate. Histidine 196 serves as the catalytic Proton donor. 3-amino-2-oxopropyl phosphate-binding positions include glycine 197 and 218–219 (GH).

It belongs to the PNP synthase family. In terms of assembly, homooctamer; tetramer of dimers.

The protein resides in the cytoplasm. The enzyme catalyses 3-amino-2-oxopropyl phosphate + 1-deoxy-D-xylulose 5-phosphate = pyridoxine 5'-phosphate + phosphate + 2 H2O + H(+). The protein operates within cofactor biosynthesis; pyridoxine 5'-phosphate biosynthesis; pyridoxine 5'-phosphate from D-erythrose 4-phosphate: step 5/5. In terms of biological role, catalyzes the complicated ring closure reaction between the two acyclic compounds 1-deoxy-D-xylulose-5-phosphate (DXP) and 3-amino-2-oxopropyl phosphate (1-amino-acetone-3-phosphate or AAP) to form pyridoxine 5'-phosphate (PNP) and inorganic phosphate. The protein is Pyridoxine 5'-phosphate synthase of Pseudomonas fluorescens (strain SBW25).